The primary structure comprises 207 residues: ATP-dependent Clp protease proteolytic subunit (207 aa).

Ser-111 acts as the Nucleophile in catalysis. His-136 is an active-site residue.

It belongs to the peptidase S14 family. As to quaternary structure, fourteen ClpP subunits assemble into 2 heptameric rings which stack back to back to give a disk-like structure with a central cavity, resembling the structure of eukaryotic proteasomes.

The protein resides in the cytoplasm. The enzyme catalyses Hydrolysis of proteins to small peptides in the presence of ATP and magnesium. alpha-casein is the usual test substrate. In the absence of ATP, only oligopeptides shorter than five residues are hydrolyzed (such as succinyl-Leu-Tyr-|-NHMec, and Leu-Tyr-Leu-|-Tyr-Trp, in which cleavage of the -Tyr-|-Leu- and -Tyr-|-Trp bonds also occurs).. Cleaves peptides in various proteins in a process that requires ATP hydrolysis. Has a chymotrypsin-like activity. Plays a major role in the degradation of misfolded proteins. This Proteus mirabilis (strain HI4320) protein is ATP-dependent Clp protease proteolytic subunit.